A 729-amino-acid polypeptide reads, in one-letter code: MATVSTGSLIFIVKKNSPMMSKLVFFWQNREKEFRDFGGFSEKSVYFCDTIDNRKRLILVVINREVLLMTFDAIDQLAVNTVRTLSMDAIQAANSGHPGLPMGAAPMAYVLWNHFMNINPKTSRNWSNRDRFILSAGHGSAMLYSLLHLAGYDLSVEDLKNFRQWGSKTPGHPEVNHTDGVEATTGPLGQGIANAVGMAMAEAHLAAKFNKPGFDIVDHYTFALNGDGDLMEGVSQEAASMAGHLKLGKLVLLYDSNDISLDGPTSMAFTEDVKGRFEAYGWQHILVKDGNDLEEIAAAIEAAKAETEKPTIIEVKTIIGFGAEKQGTSAVHGAPLGAEGIAFAKKAYQWTHQDFEVPAEVTERFAQGLQARGEKAEQAWNDLFAAYEAEYPELAAEYQKAFANEAAQVELEAHELGSSMASRVSSQQAIQQISEQVASFWGGSADLSASNNTMVKAETDFQPGHYEGRNVWFGVREFAMAAAMNGIALHGGTRVYGGTFFVFSNYLLPAVRMAALQNLPTVYVMTHDSIAVGEDGPTHEPIEQLASVRSMPNLNVIRPADGNETNAAWKRAIAETDRPTMLVLTRQNLPVLEGTKELAEDGLNKGAYILSEAKGDLEGILIATGSEVKLAMDTQEALEAEGIHVRVVSMPSQNIFDEQSAEYKESILPAAVTKRLAIEAGSSFGWAKYVGLAGKTLTIDTWGASAPGNRIFEEYGFTVANATELYKSL.

Residue histidine 97 coordinates substrate. Residues histidine 138 and 186–188 contribute to the thiamine diphosphate site; that span reads GPL. Aspartate 227 contributes to the Mg(2+) binding site. Residues glycine 228 and asparagine 257 each coordinate thiamine diphosphate. Residues asparagine 257 and isoleucine 259 each contribute to the Mg(2+) site. The substrate site is built by histidine 332, arginine 423, and serine 450. Histidine 332 serves as a coordination point for thiamine diphosphate. Glutamate 477 acts as the Proton donor in catalysis. Phenylalanine 503 provides a ligand contact to thiamine diphosphate. Residues histidine 527, aspartate 535, and arginine 586 each coordinate substrate.

This sequence belongs to the transketolase family. As to quaternary structure, homodimer. The cofactor is Mg(2+). It depends on Ca(2+) as a cofactor. Mn(2+) serves as cofactor. Co(2+) is required as a cofactor. Requires thiamine diphosphate as cofactor.

The enzyme catalyses D-sedoheptulose 7-phosphate + D-glyceraldehyde 3-phosphate = aldehydo-D-ribose 5-phosphate + D-xylulose 5-phosphate. Catalyzes the transfer of a two-carbon ketol group from a ketose donor to an aldose acceptor, via a covalent intermediate with the cofactor thiamine pyrophosphate. This Streptococcus pyogenes serotype M6 (strain ATCC BAA-946 / MGAS10394) protein is Transketolase.